Here is a 98-residue protein sequence, read N- to C-terminus: Ig heavy chain V region 6.96 (98 aa).

Residues 1 to 98 (EVQLVESGGG…EDTAMYYCAR (98 aa)) form the Ig-like domain.

This Mus musculus (Mouse) protein is Ig heavy chain V region 6.96.